A 161-amino-acid chain; its full sequence is Ribonuclease H (161 aa).

The 140-residue stretch at 2–141 (TNNEIIAATD…ADSLARQAAN (140 aa)) folds into the RNase H type-1 domain. Residues D11, E46, D69, and D133 each coordinate Mg(2+).

This sequence belongs to the RNase H family. Monomer. It depends on Mg(2+) as a cofactor.

Its subcellular location is the cytoplasm. The enzyme catalyses Endonucleolytic cleavage to 5'-phosphomonoester.. Its function is as follows. Endonuclease that specifically degrades the RNA of RNA-DNA hybrids. In Tropheryma whipplei (strain TW08/27) (Whipple's bacillus), this protein is Ribonuclease H.